The sequence spans 117 residues: Large ribosomal subunit protein bL20 (117 aa).

Belongs to the bacterial ribosomal protein bL20 family.

Binds directly to 23S ribosomal RNA and is necessary for the in vitro assembly process of the 50S ribosomal subunit. It is not involved in the protein synthesizing functions of that subunit. This Roseiflexus castenholzii (strain DSM 13941 / HLO8) protein is Large ribosomal subunit protein bL20.